The primary structure comprises 605 residues: Glucose oxidase (605 aa).

The N-terminal stretch at 1 to 18 (MVSVFLSTLLLAAATVQA) is a signal peptide. FAD is bound by residues leucine 52, threonine 53, and glutamate 73. Asparagine 111 carries an N-linked (GlcNAc...) asparagine glycan. The FAD site is built by serine 125, asparagine 129, glycine 130, and serine 132. N-linked (GlcNAc...) asparagine glycans are attached at residues asparagine 183 and asparagine 190. A disulfide bridge links cysteine 186 with cysteine 228. Valine 272 contributes to the FAD binding site. 4 N-linked (GlcNAc...) asparagine glycosylation sites follow: asparagine 335, asparagine 375, asparagine 410, and asparagine 519. Histidine 538 (proton acceptor) is an active-site residue. Lysine 559 and valine 560 together coordinate O2. FAD contacts are provided by glycine 571 and methionine 583.

Belongs to the GMC oxidoreductase family. As to quaternary structure, homodimer. The cofactor is FAD.

The protein localises to the secreted. The protein resides in the cell wall. It localises to the cytoplasmic vesicle. It catalyses the reaction beta-D-glucose + O2 = D-glucono-1,5-lactone + H2O2. Glucose oxidase catalyzes the oxidation of beta-D-glucose to D-glucono-delta-lactone and hydrogen peroxide in the presence of molecular oxygen. D-glucono-delta-lactone is sequentially hydrolyzed by lactonase to D-gluconic acid, and the resulting hydrogen peroxide is hydrolyzed by catalase to oxygen and water. Glucose oxidase alone indirectly causes toxicity in the presence of glucose and is the active compound of the antifungal antibiotic talaron. Responsible for inhibition of germination of microsclerotia of Verticillium dahliae. This Talaromyces flavus protein is Glucose oxidase.